The primary structure comprises 2566 residues: Highly reducing polyketide synthase verA (2566 aa).

Residues 3 to 440 enclose the Ketosynthase family 3 (KS3) domain; it reads PEPIAIIGTG…GTNAHAILES (438 aa). Residues 35–61 form a disordered region; that stretch reads VASEPPSTRFDNRSFYDPDPSHPGTTN. Basic and acidic residues predominate over residues 44 to 54; the sequence is FDNRSFYDPDP. Active-site for beta-ketoacyl synthase activity residues include cysteine 176, histidine 316, and histidine 360. The malonyl-CoA:ACP transacylase (MAT) domain stretch occupies residues 554-880; the sequence is IFTGQGAQWP…IGLSNRGASG (327 aa). Residue serine 648 is the For malonyltransferase activity of the active site. Residues 950–1081 are N-terminal hotdog fold; that stretch reads HPLLGSLEAD…GKLLICWGNP (132 aa). The segment at 950-1246 is dehydratase (DH) domain; that stretch reads HPLLGSLEAD…EGVHISPLGP (297 aa). One can recognise a PKS/mFAS DH domain in the interval 950-1250; sequence HPLLGSLEAD…ISPLGPPDRQ (301 aa). Catalysis depends on histidine 982, which acts as the Proton acceptor; for dehydratase activity. The interval 1096-1250 is C-terminal hotdog fold; sequence AGAVDIKDFY…ISPLGPPDRQ (155 aa). The Proton donor; for dehydratase activity role is filled by aspartate 1156. Positions 1386–1581 are methyltransferase (CMet) domain; the sequence is DVLSRFYKED…TGFGGIDTIT (196 aa). Residues 2127 to 2294 form a ketoreductase (KR) domain region; that stretch reads KTYLLVGMTG…RRARNIVGSI (168 aa). Residues 2411-2489 enclose the Carrier domain; the sequence is EAAEIVAAGL…ALTADSVSKL (79 aa). Position 2449 is an O-(pantetheine 4'-phosphoryl)serine (serine 2449). Residues 2505-2540 are disordered; that stretch reads KDVSGLTSPPEVPSDASRSSVSSGMDEIVTPESPSF. Residues 2518 to 2527 are compositionally biased toward low complexity; that stretch reads SDASRSSVSS.

Requires pantetheine 4'-phosphate as cofactor.

It participates in secondary metabolite biosynthesis; terpenoid biosynthesis. Its pathway is mycotoxin biosynthesis. In terms of biological role, highly reducing polyketide synthase (HR-PKS); part of the gene cluster that mediates the biosynthesis of the neurotoxin verrucosidin, a methylated alpha-pyrone polyketide that inhibits oxidative phosphorylation in mitochondria and thereby causes neurological diseases. The carbon backbone of verrucosidin is synthesized by the HR-PKS verA, and further modified by the other verrucodidin cluster enzymes. The chain is Highly reducing polyketide synthase verA from Penicillium polonicum.